A 115-amino-acid polypeptide reads, in one-letter code: T cell receptor beta variable 18 (115 aa).

The first 21 residues, 1–21, serve as a signal peptide directing secretion; it reads MDTRLLCCAVICLLGAGLSNA. In terms of domain architecture, Ig-like spans 22-115; the sequence is GVMQNPRHLV…SAAYFCASSP (94 aa). A disulfide bond links Cys42 and Cys111.

In terms of assembly, alpha-beta TR is a heterodimer composed of an alpha and beta chain; disulfide-linked. The alpha-beta TR is associated with the transmembrane signaling CD3 coreceptor proteins to form the TR-CD3 (TcR or TCR). The assembly of alpha-beta TR heterodimers with CD3 occurs in the endoplasmic reticulum where a single alpha-beta TR heterodimer associates with one CD3D-CD3E heterodimer, one CD3G-CD3E heterodimer and one CD247 homodimer forming a stable octameric structure. CD3D-CD3E and CD3G-CD3E heterodimers preferentially associate with TR alpha and TR beta chains, respectively. The association of the CD247 homodimer is the last step of TcR assembly in the endoplasmic reticulum and is required for transport to the cell surface.

The protein localises to the cell membrane. V region of the variable domain of T cell receptor (TR) beta chain that participates in the antigen recognition. Alpha-beta T cell receptors are antigen specific receptors which are essential to the immune response and are present on the cell surface of T lymphocytes. Recognize peptide-major histocompatibility (MH) (pMH) complexes that are displayed by antigen presenting cells (APC), a prerequisite for efficient T cell adaptive immunity against pathogens. Binding of alpha-beta TR to pMH complex initiates TR-CD3 clustering on the cell surface and intracellular activation of LCK that phosphorylates the ITAM motifs of CD3G, CD3D, CD3E and CD247 enabling the recruitment of ZAP70. In turn ZAP70 phosphorylates LAT, which recruits numerous signaling molecules to form the LAT signalosome. The LAT signalosome propagates signal branching to three major signaling pathways, the calcium, the mitogen-activated protein kinase (MAPK) kinase and the nuclear factor NF-kappa-B (NF-kB) pathways, leading to the mobilization of transcription factors that are critical for gene expression and essential for T cell growth and differentiation. The T cell repertoire is generated in the thymus, by V-(D)-J rearrangement. This repertoire is then shaped by intrathymic selection events to generate a peripheral T cell pool of self-MH restricted, non-autoaggressive T cells. Post-thymic interaction of alpha-beta TR with the pMH complexes shapes TR structural and functional avidity. In Homo sapiens (Human), this protein is T cell receptor beta variable 18.